A 273-amino-acid polypeptide reads, in one-letter code: Octanoyl-[GcvH]:protein N-octanoyltransferase (273 aa).

Residues 40–245 (ATEGAAIRSW…SLMELGATLT (206 aa)) enclose the BPL/LPL catalytic domain. The active-site Acyl-thioester intermediate is the Cys-144.

Belongs to the octanoyltransferase LipL family.

The enzyme catalyses N(6)-octanoyl-L-lysyl-[glycine-cleavage complex H protein] + L-lysyl-[lipoyl-carrier protein] = N(6)-octanoyl-L-lysyl-[lipoyl-carrier protein] + L-lysyl-[glycine-cleavage complex H protein]. Its pathway is protein modification; protein lipoylation via endogenous pathway; protein N(6)-(lipoyl)lysine from octanoyl-[acyl-carrier-protein]. Its function is as follows. Catalyzes the amidotransfer (transamidation) of the octanoyl moiety from octanoyl-GcvH to the lipoyl domain of the E2 subunit of lipoate-dependent enzymes. The sequence is that of Octanoyl-[GcvH]:protein N-octanoyltransferase from Exiguobacterium sibiricum (strain DSM 17290 / CCUG 55495 / CIP 109462 / JCM 13490 / 255-15).